A 273-amino-acid chain; its full sequence is MPLSTSLLGKKSTYKDSYDVTLLFKIPRINNRNELGINSNNLPFYGVDVWNTYELSCLNKNGKPWVGVGTFYIPTDSENIVESKSFKLYLNSFNNFVVESVKELERIILQDLSNVTHAKVTGRIFPINTKVEFGVPSGKNIDDLDIVCNNYGAPDNSLIEYEDVLVEEEINSNLLKSNCLVTGQPDWGTIVIKYKGKKLKHDSFLKYLISFRNCNEFAEQCAERIFTDIKNAISPDFLSISIVYTRRGGIDICPYRSTDKSYTLPSDKRFIRQ.

Substrate is bound at residue 81–83; the sequence is VES. 83–84 serves as a coordination point for NADPH; it reads SK. The active-site Thioimide intermediate is the cysteine 179. The active-site Proton donor is the aspartate 186. Substrate is bound at residue 218–219; that stretch reads AE. 247-248 serves as a coordination point for NADPH; the sequence is RG.

This sequence belongs to the GTP cyclohydrolase I family. QueF type 2 subfamily. As to quaternary structure, homodimer.

It localises to the cytoplasm. It carries out the reaction 7-aminomethyl-7-carbaguanine + 2 NADP(+) = 7-cyano-7-deazaguanine + 2 NADPH + 3 H(+). It participates in tRNA modification; tRNA-queuosine biosynthesis. Catalyzes the NADPH-dependent reduction of 7-cyano-7-deazaguanine (preQ0) to 7-aminomethyl-7-deazaguanine (preQ1). This is NADPH-dependent 7-cyano-7-deazaguanine reductase from Rickettsia massiliae (strain Mtu5).